The sequence spans 79 residues: Ponericin-W-like 32.1 (79 aa).

Residues 1–23 (MKCKKQLLVIFFAYFLVVNESEA) form the signal peptide. Residues 49–79 (RALMKRDLEDIMDPYQKNLKLDRYLRRLAMD) constitute a propeptide that is removed on maturation.

Belongs to the non-disulfide-bridged peptide (NDBP) superfamily. Medium-length antimicrobial peptide (group 3) family. Ponericin-W subfamily. In terms of tissue distribution, expressed by the venom gland.

It localises to the secreted. Its subcellular location is the target cell membrane. In terms of biological role, antimicrobial peptide with potent activity against a range of Gram-positive and Gram-negative bacteria. Has high hemolytic activity against erythrocytes. May act by disrupting the integrity of the bacterial cell membrane. The polypeptide is Ponericin-W-like 32.1 (Lychas mucronatus (Chinese swimming scorpion)).